The sequence spans 116 residues: APDAAPASLYAPSALVLTIGHGGAAATATPERAVTLTCAPTSSGTHPAASAACAELRGVGGDFAALKARDDVWCNKLYDPVVVTAQGVWQGQRVSYERTFGNSCERDAVGGSLFAF.

Disulfide bonds link Cys38-Cys53 and Cys74-Cys104.

Belongs to the protease inhibitor I16 (SSI) family. In terms of assembly, homodimer.

The protein resides in the secreted. Its function is as follows. Inhibitor of subtilisin BPN' and trypsin. The chain is Subtilisin inhibitor-like protein 4 from Streptomyces lavendulae.